A 445-amino-acid chain; its full sequence is POU domain, class 3, transcription factor 2 (445 aa).

Disordered stretches follow at residues 64-173 (ALSH…WRSA) and 203-269 (LGAG…TPTS). The span at 67–90 (HGGGGGGGGGGGGGGGGGGGGGDG) shows a compositional bias: gly residues. 2 stretches are compositionally biased toward low complexity: residues 125-151 (QQQH…QQQQ) and 163-173 (HHPGPGAWRSA). Basic and acidic residues predominate over residues 217 to 226 (LRDAHDEPHH). Residues 227-237 (ADHHPHPHSHP) are compositionally biased toward basic residues. Residues 239–253 (QQPPPPPPPQGPPGH) are compositionally biased toward pro residues. One can recognise a POU-specific domain in the interval 264–338 (EDTPTSDDLE…LLNKWLEEAD (75 aa)). Residue Ser-343 is modified to Phosphoserine. A DNA-binding region (homeobox) is located at residues 356–415 (KRKKRTSIEVSVKGALESHFLKCPKPSAQEITSLADSLQLEKEVVRVWFCNRRQKEKRMT). The interval 411 to 445 (EKRMTPPGGTLPGAEDVYGGSRDTPPHHGVQTPVQ) is disordered.

Belongs to the POU transcription factor family. Class-3 subfamily. As to quaternary structure, interacts with PQBP1. Interaction with ISL1. In terms of tissue distribution, expressed specifically in the neuroectodermal cell lineage.

The protein resides in the nucleus. Transcription factor that plays a key role in neuronal differentiation. Binds preferentially to the recognition sequence which consists of two distinct half-sites, ('GCAT') and ('TAAT'), separated by a non-conserved spacer region of 0, 2, or 3 nucleotides. Acts as a transcriptional activator when binding cooperatively with SOX4, SOX11, or SOX12 to gene promoters. The combination of three transcription factors, ASCL1, POU3F2/BRN2 and MYT1L, is sufficient to reprogram fibroblasts and other somatic cells into induced neuronal (iN) cells in vitro. Acts downstream of ASCL1, accessing chromatin that has been opened by ASCL1, and promotes transcription of neuronal genes. This chain is POU domain, class 3, transcription factor 2 (Pou3f2), found in Mus musculus (Mouse).